The sequence spans 346 residues: UDP-3-O-acylglucosamine N-acyltransferase (346 aa).

The Proton acceptor role is filled by H240.

The protein belongs to the transferase hexapeptide repeat family. LpxD subfamily. As to quaternary structure, homotrimer.

The catalysed reaction is a UDP-3-O-[(3R)-3-hydroxyacyl]-alpha-D-glucosamine + a (3R)-hydroxyacyl-[ACP] = a UDP-2-N,3-O-bis[(3R)-3-hydroxyacyl]-alpha-D-glucosamine + holo-[ACP] + H(+). The protein operates within bacterial outer membrane biogenesis; LPS lipid A biosynthesis. Its function is as follows. Catalyzes the N-acylation of UDP-3-O-acylglucosamine using 3-hydroxyacyl-ACP as the acyl donor. Is involved in the biosynthesis of lipid A, a phosphorylated glycolipid that anchors the lipopolysaccharide to the outer membrane of the cell. This chain is UDP-3-O-acylglucosamine N-acyltransferase, found in Bacteroides fragilis (strain ATCC 25285 / DSM 2151 / CCUG 4856 / JCM 11019 / LMG 10263 / NCTC 9343 / Onslow / VPI 2553 / EN-2).